The chain runs to 52 residues: Sperm protamine P1 (52 aa).

The disordered stretch occupies residues 1-27 (MARYSCCRSHSRSRSRRRRQRCRRRRR). A compositionally biased stretch (basic residues) spans 9–27 (SHSRSRSRRRRQRCRRRRR).

It belongs to the protamine P1 family. In terms of tissue distribution, testis.

The protein localises to the nucleus. It is found in the chromosome. Its function is as follows. Protamines substitute for histones in the chromatin of sperm during the haploid phase of spermatogenesis. They compact sperm DNA into a highly condensed, stable and inactive complex. The chain is Sperm protamine P1 (PRM1) from Rhinolophus ferrumequinum (Greater horseshoe bat).